We begin with the raw amino-acid sequence, 931 residues long: Myelin regulatory factor homolog 1 (931 aa).

Residues 1–658 (MSSSDLLKGE…SCGSRLSQGT (658 aa)) are Cytoplasmic-facing. The tract at residues 29 to 143 (TDEDDGSMVS…QQHQQTRGGN (115 aa)) is disordered. Residues 37-52 (VSPTSSADSMHQNLGV) show a composition bias toward polar residues. The span at 53-68 (QQQQQQMLQAQQRQNQ) shows a compositional bias: low complexity. Residues 117–126 (DNGNQTMNNI) show a composition bias toward polar residues. Over residues 127–138 (QSQQLSQQQHQQ) the composition is skewed to low complexity. Residues 169 to 436 (GTAAVNQPTN…TNPGSFEPQD (268 aa)) constitute a DNA-binding region (NDT80). A Peptidase S74 domain is found at 483–582 (SDIRLKEAIT…RMTGDLDSKI (100 aa)). Residues 659-679 (VVTLVSIMAACLLAMSALYVL) traverse the membrane as a helical segment. Residues 680–931 (DWHNRNYGYH…FYRMCTLSSS (252 aa)) lie on the Lumenal side of the membrane. Residues N797 and N912 are each glycosylated (N-linked (GlcNAc...) asparagine).

This sequence belongs to the MRF family. Homotrimer. Interacts with myrf-2. Interacts (via C-terminus) with pan-1 (via LRR regions); the interaction promotes the role of myrf-1 in the synaptic remodeling of DD GABAergic motor neurons at the cell membrane. In terms of processing, myelin regulatory factor: Follows autocatalytic cleavage via the peptidase S74 domain. Autoprocessing is apparently constitutive and is essential for transcriptional activity. Widely expressed in many tissues, including neuronal, muscle and epidermal stem cells. In neurons, expressed in dorsal D (DD) GABAergic motor neurons.

The protein resides in the endoplasmic reticulum membrane. It localises to the nucleus. Its subcellular location is the apical cell membrane. The protein localises to the cytoplasm. Constitutes a precursor of the transcription factor. Mediates the autocatalytic cleavage that releases the Myelin regulatory factor homolog 1, N-terminal component that specifically activates transcription of genes involved in synaptic rewiring during nervous system maturation. Its function is as follows. Membrane-bound part that has no transcription factor activity and remains attached to the endoplasmic reticulum membrane following cleavage. Functionally, transcription factor that specifically activates expression of genes involved in synaptic rewiring during nervous system maturation. Specifically required for dorsal D (DD) GABAergic motor neurons synaptic rewiring. Acts in complex with myrf-2 paralog. The chain is Myelin regulatory factor homolog 1 from Caenorhabditis elegans.